The primary structure comprises 513 residues: Sucrose transport protein SUC1 (513 aa).

Positions 1–11 are enriched in basic and acidic residues; the sequence is MGAYETEKPTK. The disordered stretch occupies residues 1–26; sequence MGAYETEKPTKDAAALETQSPEDFDQ. The Cytoplasmic segment spans residues 1 to 32; sequence MGAYETEKPTKDAAALETQSPEDFDQPSPLRK. At Ser-20 the chain carries Phosphoserine. The helical transmembrane segment at 33-53 threads the bilayer; sequence IISVASIAAGVQFGWALQLSL. Over 54 to 67 the chain is Extracellular; it reads LTPYVQLLGIPHKW. The helical transmembrane segment at 68-88 threads the bilayer; the sequence is SSLIWLCGPVSGMIVQPIVGF. The Cytoplasmic segment spans residues 89-101; that stretch reads HSDRCRSKFGRRR. Residues 102 to 122 form a helical membrane-spanning segment; the sequence is PFIATGAALVAVAVFLIGYAA. Residues 123-139 lie on the Extracellular side of the membrane; it reads DFGYKMGDKLEEKVKVR. A helical membrane pass occupies residues 140-160; sequence AIGIFALGFWILDVANNTLQG. Topologically, residues 161–178 are cytoplasmic; it reads PCRAFLADLAAGDAKRTR. A helical membrane pass occupies residues 179-199; sequence VANAFFSFFMAVGNVLGYAAG. Residues 200 to 224 are Extracellular-facing; the sequence is SYTNLHKMFPFTMTKACDIYCANLK. Residues 225–245 traverse the membrane as a helical segment; it reads TCFFLSITLLLIVTVTSLWYV. The Cytoplasmic segment spans residues 246–282; the sequence is NDKQWSPPPRNADDDEKTSSVPLFGEIFGAFKVMKRP. The helical transmembrane segment at 283–303 threads the bilayer; it reads MWMLLIVTALNWIAWFPFLLF. Over 304–334 the chain is Extracellular; it reads DTDWMGREVFGGDSDGNERSKKLYSLGVQSG. A helical membrane pass occupies residues 335 to 355; it reads AMGLMFNSIVLGFMSLGVEWI. Residues 356-365 are Cytoplasmic-facing; it reads GRKLGGAKRL. The chain crosses the membrane as a helical span at residues 366 to 386; sequence WGIVNFILAAGLAMTVLVTKF. The Extracellular segment spans residues 387 to 408; sequence AEDHRKTAGDLAGPSASVKAGA. A helical transmembrane segment spans residues 409–429; sequence LSLFAVLGIPLAITFSTPFAL. The Cytoplasmic segment spans residues 430–441; sequence ASIFSSCSGAGQ. A helical transmembrane segment spans residues 442–462; sequence GLSLGVLNLAIVIPQMIVSLG. The Extracellular segment spans residues 463 to 474; the sequence is GGPFDALFGGGN. The chain crosses the membrane as a helical span at residues 475-495; it reads LPAFIVAAIAAAISGVLALTV. Residues 496 to 513 lie on the Cytoplasmic side of the membrane; sequence LPSPPPDAPKATTMGGFH.

The protein belongs to the glycoside-pentoside-hexuronide (GPH) cation symporter transporter (TC 2.A.2.4) family. In terms of tissue distribution, expressed in flowers (at protein level). Highly expressed in pollen. Expressed in pollen tubes and root vascular cylinder, pericycle and endodermis.

Its subcellular location is the membrane. The catalysed reaction is sucrose(out) + H(+)(out) = sucrose(in) + H(+)(in). The protein operates within glycan biosynthesis; sucrose metabolism. With respect to regulation, inhibited by DEPC, protonophores (e.g. dinitrophenol and carbonyl cyanide m-chlorophenyl-hydrazone (CCCP)), and SH group inhibitors (e.g. N-ethylmaleimide (NEM) and p-chloromercuriphenyl sulphonic acid (PCMPS)). In terms of biological role, responsible for the transport of sucrose into the cell, with the concomitant uptake of protons (symport system). This transport is both voltage- and energy-dependent. Can also transport other glucosides such as maltose, alpha-phenylglucoside and beta-phenylglucoside. May also transport biotin. Required for normal pollen germination and anthocyanin accumulation induced by sucrose. In Arabidopsis thaliana (Mouse-ear cress), this protein is Sucrose transport protein SUC1.